The primary structure comprises 389 residues: Type III polyketide synthase 21 (389 aa).

Cys170 (nucleophile) is an active-site residue.

The protein belongs to the thiolase-like superfamily. Chalcone/stilbene synthases family. Expressed in anthers. Expressed in young and adult flowers.

Functionally, plant type III polyketide synthases (PKSs) that catalyzes the condensation of fatty acyl-CoA with malonyl-CoA to generate triketide and tetraketide alpha-pyrones, the main components of pollen exine and potential sporopollenin precursors. In Oryza sativa subsp. japonica (Rice), this protein is Type III polyketide synthase 21 (PKS21).